A 303-amino-acid chain; its full sequence is UDP-3-O-acyl-N-acetylglucosamine deacetylase (303 aa).

Residues H78, H237, and D241 each coordinate Zn(2+). H264 (proton donor) is an active-site residue.

This sequence belongs to the LpxC family. Zn(2+) serves as cofactor.

The catalysed reaction is a UDP-3-O-[(3R)-3-hydroxyacyl]-N-acetyl-alpha-D-glucosamine + H2O = a UDP-3-O-[(3R)-3-hydroxyacyl]-alpha-D-glucosamine + acetate. It participates in glycolipid biosynthesis; lipid IV(A) biosynthesis; lipid IV(A) from (3R)-3-hydroxytetradecanoyl-[acyl-carrier-protein] and UDP-N-acetyl-alpha-D-glucosamine: step 2/6. Catalyzes the hydrolysis of UDP-3-O-myristoyl-N-acetylglucosamine to form UDP-3-O-myristoylglucosamine and acetate, the committed step in lipid A biosynthesis. This is UDP-3-O-acyl-N-acetylglucosamine deacetylase from Pseudomonas syringae pv. tomato (strain ATCC BAA-871 / DC3000).